The primary structure comprises 277 residues: NH(3)-dependent NAD(+) synthetase (277 aa).

36–43 (GLSGGIDS) provides a ligand contact to ATP. Aspartate 42 is a Mg(2+) binding site. A deamido-NAD(+)-binding site is contributed by arginine 118. Residue threonine 138 participates in ATP binding. Glutamate 143 is a Mg(2+) binding site. ATP-binding residues include lysine 167 and serine 189.

This sequence belongs to the NAD synthetase family. As to quaternary structure, homodimer.

It catalyses the reaction deamido-NAD(+) + NH4(+) + ATP = AMP + diphosphate + NAD(+) + H(+). It participates in cofactor biosynthesis; NAD(+) biosynthesis; NAD(+) from deamido-NAD(+) (ammonia route): step 1/1. Functionally, catalyzes the ATP-dependent amidation of deamido-NAD to form NAD. Uses ammonia as a nitrogen source. The protein is NH(3)-dependent NAD(+) synthetase of Chlorobium phaeobacteroides (strain DSM 266 / SMG 266 / 2430).